The following is a 174-amino-acid chain: MNYFELFNLPVAFDVNTSELADKYRELQRTVHPDKFAAASEQEKLLAVSRTAMVNDGFQTLKDPIRRAEHMLALKGVDIRHETQTVRDTAFLMQQMEWREALEEITHADDPHCLIADLYQSFGDFQKQVTAKLKTLLVSEDDNDLQAAADQVRKLKFMAKLHVELERAEDALLD.

In terms of domain architecture, J spans Asn-2–Leu-74.

This sequence belongs to the HscB family. In terms of assembly, interacts with HscA and stimulates its ATPase activity.

Co-chaperone involved in the maturation of iron-sulfur cluster-containing proteins. Seems to help targeting proteins to be folded toward HscA. The chain is Co-chaperone protein HscB homolog from Shewanella amazonensis (strain ATCC BAA-1098 / SB2B).